The primary structure comprises 326 residues: Pyruvate dehydrogenase E1 component subunit alpha (326 aa).

As to quaternary structure, heterodimer of an alpha and a beta chain. The cofactor is thiamine diphosphate.

It carries out the reaction N(6)-[(R)-lipoyl]-L-lysyl-[protein] + pyruvate + H(+) = N(6)-[(R)-S(8)-acetyldihydrolipoyl]-L-lysyl-[protein] + CO2. Functionally, the pyruvate dehydrogenase complex catalyzes the overall conversion of pyruvate to acetyl-CoA and CO(2). It contains multiple copies of three enzymatic components: pyruvate dehydrogenase (E1), dihydrolipoamide acetyltransferase (E2) and lipoamide dehydrogenase (E3). The sequence is that of Pyruvate dehydrogenase E1 component subunit alpha (pdhA) from Rickettsia felis (strain ATCC VR-1525 / URRWXCal2) (Rickettsia azadi).